The chain runs to 149 residues: 3-hydroxyacyl-[acyl-carrier-protein] dehydratase FabZ (149 aa).

Residue His-52 is part of the active site.

Belongs to the thioester dehydratase family. FabZ subfamily.

It is found in the cytoplasm. It carries out the reaction a (3R)-hydroxyacyl-[ACP] = a (2E)-enoyl-[ACP] + H2O. Involved in unsaturated fatty acids biosynthesis. Catalyzes the dehydration of short chain beta-hydroxyacyl-ACPs and long chain saturated and unsaturated beta-hydroxyacyl-ACPs. The polypeptide is 3-hydroxyacyl-[acyl-carrier-protein] dehydratase FabZ (Cupriavidus necator (strain ATCC 17699 / DSM 428 / KCTC 22496 / NCIMB 10442 / H16 / Stanier 337) (Ralstonia eutropha)).